We begin with the raw amino-acid sequence, 215 residues long: Cytochrome b6 (215 aa).

Residues 32–52 (IFYCLGGITLTCFLVQVATGF) traverse the membrane as a helical segment. Cys-35 provides a ligand contact to heme c. Positions 86 and 100 each coordinate heme b. 3 helical membrane passes run 90–110 (ASMM…TGGF), 116–136 (LTWV…VTGY), and 186–206 (LHTF…FPMI). 2 residues coordinate heme b: His-187 and His-202.

The protein belongs to the cytochrome b family. PetB subfamily. As to quaternary structure, the 4 large subunits of the cytochrome b6-f complex are cytochrome b6, subunit IV (17 kDa polypeptide, PetD), cytochrome f and the Rieske protein, while the 4 small subunits are PetG, PetL, PetM and PetN. The complex functions as a dimer. Heme b serves as cofactor. The cofactor is heme c.

Its subcellular location is the plastid. The protein resides in the chloroplast thylakoid membrane. Functionally, component of the cytochrome b6-f complex, which mediates electron transfer between photosystem II (PSII) and photosystem I (PSI), cyclic electron flow around PSI, and state transitions. In Saccharum hybrid (Sugarcane), this protein is Cytochrome b6.